Reading from the N-terminus, the 138-residue chain is Transcription antitermination protein NusB (138 aa).

The protein belongs to the NusB family.

Functionally, involved in transcription antitermination. Required for transcription of ribosomal RNA (rRNA) genes. Binds specifically to the boxA antiterminator sequence of the ribosomal RNA (rrn) operons. The protein is Transcription antitermination protein NusB of Blochmanniella floridana.